The following is a 373-amino-acid chain: Flagellar P-ring protein (373 aa).

Residues 1 to 26 (MRLLFRFLTLVAVLAMSLADVAPAWA) form the signal peptide.

This sequence belongs to the FlgI family. In terms of assembly, the basal body constitutes a major portion of the flagellar organelle and consists of four rings (L,P,S, and M) mounted on a central rod.

It localises to the periplasm. The protein resides in the bacterial flagellum basal body. Its function is as follows. Assembles around the rod to form the L-ring and probably protects the motor/basal body from shearing forces during rotation. The polypeptide is Flagellar P-ring protein (Rhizobium etli (strain CIAT 652)).